A 349-amino-acid polypeptide reads, in one-letter code: Histidinol-phosphate aminotransferase (349 aa).

Residue K206 is modified to N6-(pyridoxal phosphate)lysine.

Belongs to the class-II pyridoxal-phosphate-dependent aminotransferase family. Histidinol-phosphate aminotransferase subfamily. Homodimer. The cofactor is pyridoxal 5'-phosphate.

It catalyses the reaction L-histidinol phosphate + 2-oxoglutarate = 3-(imidazol-4-yl)-2-oxopropyl phosphate + L-glutamate. It participates in amino-acid biosynthesis; L-histidine biosynthesis; L-histidine from 5-phospho-alpha-D-ribose 1-diphosphate: step 7/9. This is Histidinol-phosphate aminotransferase from Streptococcus mutans serotype c (strain ATCC 700610 / UA159).